Consider the following 251-residue polypeptide: MAGHSKWETTKRKKAAIDAKRGKEFARLVKNIEVAARMGGGDPDANPTLQDAITKAKKSSVPNDNIERARKRGSGEEAGGSDWETIMYEGYGPGGVAMLIECLTDNRNRAATDVRTAMTKNGGNMADAGSVSYQFERKGQALLDKGELTEDDLLLAVLDAGAEEVKDHGEQFEVLCDISDLMGVREALKEAGIEYDSVEQVYRSNLEVPADAELARKVANLIDALDDVDDVQEIYTNMSVSDEVAAELAED.

Residues 56–79 (AKKSSVPNDNIERARKRGSGEEAG) are disordered.

The protein belongs to the TACO1 family.

It localises to the cytoplasm. The sequence is that of Probable transcriptional regulatory protein cu0933 from Corynebacterium urealyticum (strain ATCC 43042 / DSM 7109).